The primary structure comprises 472 residues: Methanethiol oxidase (472 aa).

Ala-2 bears the N-acetylalanine mark. Phosphoserine occurs at positions 111 and 467.

This sequence belongs to the selenium-binding protein family. In terms of assembly, interacts with USP33. Post-translationally, the N-terminus is blocked. In terms of tissue distribution, highly expressed in liver, kidney and, to a lesser extent, lung.

It localises to the nucleus. The protein localises to the cytoplasm. The protein resides in the cytosol. It is found in the membrane. The catalysed reaction is methanethiol + O2 + H2O = hydrogen sulfide + formaldehyde + H2O2 + H(+). Its pathway is organosulfur degradation. Its function is as follows. Catalyzes the oxidation of methanethiol, an organosulfur compound known to be produced in substantial amounts by gut bacteria. Selenium-binding protein which may be involved in the sensing of reactive xenobiotics in the cytoplasm. May be involved in intra-Golgi protein transport. The chain is Methanethiol oxidase (Selenbp1) from Mus musculus (Mouse).